The following is a 304-amino-acid chain: ATP synthase gamma chain (304 aa).

Belongs to the ATPase gamma chain family. F-type ATPases have 2 components, CF(1) - the catalytic core - and CF(0) - the membrane proton channel. CF(1) has five subunits: alpha(3), beta(3), gamma(1), delta(1), epsilon(1). CF(0) has three main subunits: a, b and c.

It is found in the cell membrane. Produces ATP from ADP in the presence of a proton gradient across the membrane. The gamma chain is believed to be important in regulating ATPase activity and the flow of protons through the CF(0) complex. The sequence is that of ATP synthase gamma chain from Chloroherpeton thalassium (strain ATCC 35110 / GB-78).